A 210-amino-acid chain; its full sequence is Thymidylate kinase (210 aa).

Gly11–Thr18 provides a ligand contact to ATP.

Belongs to the thymidylate kinase family.

It carries out the reaction dTMP + ATP = dTDP + ADP. In terms of biological role, phosphorylation of dTMP to form dTDP in both de novo and salvage pathways of dTTP synthesis. The polypeptide is Thymidylate kinase (tmk) (Halalkalibacterium halodurans (strain ATCC BAA-125 / DSM 18197 / FERM 7344 / JCM 9153 / C-125) (Bacillus halodurans)).